Consider the following 272-residue polypeptide: Putative pyruvate, phosphate dikinase regulatory protein (272 aa).

Residue 153–160 (GVSRTSKT) coordinates ADP.

It belongs to the pyruvate, phosphate/water dikinase regulatory protein family. PDRP subfamily.

The catalysed reaction is N(tele)-phospho-L-histidyl/L-threonyl-[pyruvate, phosphate dikinase] + ADP = N(tele)-phospho-L-histidyl/O-phospho-L-threonyl-[pyruvate, phosphate dikinase] + AMP + H(+). It catalyses the reaction N(tele)-phospho-L-histidyl/O-phospho-L-threonyl-[pyruvate, phosphate dikinase] + phosphate + H(+) = N(tele)-phospho-L-histidyl/L-threonyl-[pyruvate, phosphate dikinase] + diphosphate. Bifunctional serine/threonine kinase and phosphorylase involved in the regulation of the pyruvate, phosphate dikinase (PPDK) by catalyzing its phosphorylation/dephosphorylation. This chain is Putative pyruvate, phosphate dikinase regulatory protein, found in Streptococcus sanguinis (strain SK36).